A 424-amino-acid polypeptide reads, in one-letter code: Phosphomethylpyrimidine synthase (424 aa).

Substrate-binding positions include asparagine 66, methionine 95, tyrosine 124, histidine 163, 185 to 187, 226 to 229, and glutamate 265; these read SRG and DGMR. Histidine 269 lines the Zn(2+) pocket. Phenylalanine 292 lines the substrate pocket. Residue histidine 333 participates in Zn(2+) binding. [4Fe-4S] cluster is bound by residues cysteine 408, cysteine 411, and cysteine 415.

It belongs to the ThiC family. [4Fe-4S] cluster is required as a cofactor.

It catalyses the reaction 5-amino-1-(5-phospho-beta-D-ribosyl)imidazole + S-adenosyl-L-methionine = 4-amino-2-methyl-5-(phosphooxymethyl)pyrimidine + CO + 5'-deoxyadenosine + formate + L-methionine + 3 H(+). It participates in cofactor biosynthesis; thiamine diphosphate biosynthesis. Catalyzes the synthesis of the hydroxymethylpyrimidine phosphate (HMP-P) moiety of thiamine from aminoimidazole ribotide (AIR) in a radical S-adenosyl-L-methionine (SAM)-dependent reaction. The sequence is that of Phosphomethylpyrimidine synthase from Thermotoga petrophila (strain ATCC BAA-488 / DSM 13995 / JCM 10881 / RKU-1).